Consider the following 196-residue polypeptide: Probable malonic semialdehyde reductase RutE (196 aa).

It belongs to the nitroreductase family. HadB/RutE subfamily. Requires FMN as cofactor.

It catalyses the reaction 3-hydroxypropanoate + NADP(+) = 3-oxopropanoate + NADPH + H(+). In terms of biological role, may reduce toxic product malonic semialdehyde to 3-hydroxypropionic acid, which is excreted. This chain is Probable malonic semialdehyde reductase RutE, found in Enterobacter sp. (strain 638).